Reading from the N-terminus, the 155-residue chain is Large ribosomal subunit protein eL24 (155 aa).

The tract at residues 92-155 (AKRNMKPEVR…KAAPRVGGKR (64 aa)) is disordered. Positions 96 to 117 (MKPEVRKAQREQAIKQAKEQKK) are enriched in basic and acidic residues. A compositionally biased stretch (low complexity) spans 124–133 (KTTAPPTKGK).

This sequence belongs to the eukaryotic ribosomal protein eL24 family.

The polypeptide is Large ribosomal subunit protein eL24 (RpL24) (Plutella xylostella (Diamondback moth)).